We begin with the raw amino-acid sequence, 340 residues long: NADH-quinone oxidoreductase subunit H (340 aa).

9 consecutive transmembrane segments (helical) span residues Leu3–Met23, Trp69–Ile89, Val102–Ile122, Val127–Ile147, Ile154–Leu174, Met186–Leu206, Ile248–Ile268, Ile274–Val294, and Lys312–Val332.

Belongs to the complex I subunit 1 family. NDH-1 is composed of 14 different subunits. Subunits NuoA, H, J, K, L, M, N constitute the membrane sector of the complex.

The protein resides in the cell inner membrane. The enzyme catalyses a quinone + NADH + 5 H(+)(in) = a quinol + NAD(+) + 4 H(+)(out). NDH-1 shuttles electrons from NADH, via FMN and iron-sulfur (Fe-S) centers, to quinones in the respiratory chain. The immediate electron acceptor for the enzyme in this species is believed to be ubiquinone. Couples the redox reaction to proton translocation (for every two electrons transferred, four hydrogen ions are translocated across the cytoplasmic membrane), and thus conserves the redox energy in a proton gradient. This subunit may bind ubiquinone. The polypeptide is NADH-quinone oxidoreductase subunit H (Anaplasma phagocytophilum (strain HZ)).